The primary structure comprises 346 residues: L-threonine dehydratase catabolic TdcB (346 aa).

AMP is bound at residue 59–60 (FT). Residue K64 is modified to N6-(pyridoxal phosphate)lysine. Residues Q94, 125-126 (GY), and N321 contribute to the AMP site.

Belongs to the serine/threonine dehydratase family. In the native structure, TdcB is in a dimeric form, whereas in the TdcB-AMP complex, it exists in a tetrameric form (dimer of dimers). Requires pyridoxal 5'-phosphate as cofactor.

It catalyses the reaction L-threonine = 2-oxobutanoate + NH4(+). The protein operates within amino-acid degradation; L-threonine degradation via propanoate pathway; propanoate from L-threonine: step 1/4. Its activity is regulated as follows. Each protein molecule can bind up to four molecules of AMP, which act as an allosteric activator to the enzyme. In terms of biological role, catalyzes the anaerobic formation of alpha-ketobutyrate and ammonia from threonine in a two-step reaction. The first step involved a dehydration of threonine and a production of enamine intermediates (aminocrotonate), which tautomerizes to its imine form (iminobutyrate). Both intermediates are unstable and short-lived. The second step is the nonenzymatic hydrolysis of the enamine/imine intermediates to form 2-ketobutyrate and free ammonia. In the low water environment of the cell, the second step is accelerated by RidA. In Staphylococcus aureus (strain Mu50 / ATCC 700699), this protein is L-threonine dehydratase catabolic TdcB (tdcB).